Consider the following 347-residue polypeptide: MAERLLVTALKGGKNTKILTLNGKRITKMPSTLEKLPNLKTLDLQNNSISKVCPELRTLTQLTLLNLGNNHLQEVPEEIKYLTSLKNLHLFGNRICRIAPGVFNGLHRLIMLNLNDNRLTSLPQEIGRLRSLTYLSLNRNNLTVIPKELCSLEHLSELHLNYNQIVYIPEEIKFLKNLQQLFLVRNNIEELPEEICHLEKLRVLDIAGNVIQIFPAGFQNLRLTEFYCEGNPLFLKRPFFAVQPKDLWTLREIAARFVLSLLEENDPLIMNVIESYPEVKDKLSKAKKCSICRKPFLTEWLECVYFVAPSKNWKISRNLKLIPVQTSVCSYQCFDQRDPDVFGIAQE.

LRR repeat units lie at residues 15–37 (NTKI…EKLP), 38–60 (NLKT…RTLT), 61–82 (QLTL…IKYL), 84–105 (SLKN…VFNG), 108–129 (RLIM…IGRL), 131–152 (SLTY…LCSL), 154–175 (HLSE…IKFL), 177–198 (NLQQ…ICHL), and 200–222 (KLRV…QNLR).

This sequence belongs to the LRRC69 family.

The polypeptide is Leucine-rich repeat-containing protein 69 (Lrrc69) (Mus musculus (Mouse)).